Consider the following 241-residue polypeptide: Platelet-derived growth factor subunit B (241 aa).

A signal peptide spans 1–20 (MNRCWALFLSLCCYLRLVSA). The propeptide at 21-81 (EGDPIPEELY…ELESLARGRR (61 aa)) is removed in mature form. An N-linked (GlcNAc...) asparagine glycan is attached at N63. 3 disulfide bridges follow: C97/C141, C130/C178, and C134/C180. The propeptide at 191–241 (RSPGGSQEQRAKTPQTRVTIRTVRVRRPPKGKHRKFKHTHDKTALKETLGA) is removed in mature form. Positions 216–230 (RRPPKGKHRKFKHTH) are enriched in basic residues. The tract at residues 216 to 241 (RRPPKGKHRKFKHTHDKTALKETLGA) is disordered.

Belongs to the PDGF/VEGF growth factor family. As to quaternary structure, antiparallel homodimer; disulfide-linked. Antiparallel heterodimer with PDGFA; disulfide-linked. The PDGFB homodimer interacts with PDGFRA and PDGFRB homodimers, and with heterodimers formed by PDGFRA and PDGFRB. The heterodimer composed of PDGFA and PDGFB interacts with PDGFRB homodimers, and with heterodimers formed by PDGFRA and PDGFRB. Interacts with XLKD1. Interacts with LRP1. Interacts with SORL1 (via the N-terminal ectodomain). Interacts with CD82; this interaction inhibits PDGFB-mediated signaling pathway. As to expression, expressed at high levels in the heart, brain (sustantia nigra), placenta and fetal kidney. Expressed at moderate levels in the brain (hippocampus), skeletal muscle, kidney and lung.

The protein localises to the secreted. Its function is as follows. Growth factor that plays an essential role in the regulation of embryonic development, cell proliferation, cell migration, survival and chemotaxis. Potent mitogen for cells of mesenchymal origin. Required for normal proliferation and recruitment of pericytes and vascular smooth muscle cells in the central nervous system, skin, lung, heart and placenta. Required for normal blood vessel development, and for normal development of kidney glomeruli. Plays an important role in wound healing. Signaling is modulated by the formation of heterodimers with PDGFA. The chain is Platelet-derived growth factor subunit B (PDGFB) from Homo sapiens (Human).